The following is a 166-amino-acid chain: Large ribosomal subunit protein uL11 (166 aa).

Arginine 67 bears the N5-methylarginine mark.

The protein belongs to the universal ribosomal protein uL11 family.

The protein is Large ribosomal subunit protein uL11 (RPL12) of Encephalitozoon cuniculi (strain GB-M1) (Microsporidian parasite).